We begin with the raw amino-acid sequence, 346 residues long: Sensor histidine kinase GraS (346 aa).

2 consecutive transmembrane segments (helical) span residues methionine 15 to aspartate 35 and leucine 43 to phenylalanine 63. The region spanning glutamate 126 to asparagine 332 is the Histidine kinase domain.

As to quaternary structure, interacts with GraX.

The protein resides in the cell membrane. The enzyme catalyses ATP + protein L-histidine = ADP + protein N-phospho-L-histidine.. Functionally, member of the two-component regulatory system GraR/GraS involved in resistance against cationic antimicrobial peptides (CAMPs). Functions as a sensor protein kinase which phosphorylates GraR through the auxiliary protein GraX. In turn, GraR up-regulates many genes such as adhesins, exoproteins, transporters, toxins, and proteins involved in cell wall synthesis. Down-regulates the expression of many genes involved in RNA and amino acid synthesis or glycolysis. The polypeptide is Sensor histidine kinase GraS (graS) (Staphylococcus aureus (strain Mu50 / ATCC 700699)).